Consider the following 61-residue polypeptide: MAKTSMIIKAQRGSKFKVREYNRCPLCGRPRAYYRKFDMCRICLRKLASAGQIPGVIKSSW.

4 residues coordinate Zn(2+): Cys-24, Cys-27, Cys-40, and Cys-43.

Belongs to the universal ribosomal protein uS14 family. Zinc-binding uS14 subfamily. As to quaternary structure, part of the 30S ribosomal subunit. Contacts proteins S3 and S10. It depends on Zn(2+) as a cofactor.

Binds 16S rRNA, required for the assembly of 30S particles and may also be responsible for determining the conformation of the 16S rRNA at the A site. The sequence is that of Small ribosomal subunit protein uS14 from Geotalea uraniireducens (strain Rf4) (Geobacter uraniireducens).